The primary structure comprises 134 residues: Large ribosomal subunit protein uL16c (134 aa).

It belongs to the universal ribosomal protein uL16 family. In terms of assembly, part of the 50S ribosomal subunit.

It is found in the plastid. It localises to the chloroplast. The polypeptide is Large ribosomal subunit protein uL16c (Guillardia theta (Cryptophyte)).